The following is a 358-amino-acid chain: DNA replication and repair protein RecF (358 aa).

Residue 30-37 (GNNGSGKT) coordinates ATP.

Belongs to the RecF family.

It localises to the cytoplasm. Functionally, the RecF protein is involved in DNA metabolism; it is required for DNA replication and normal SOS inducibility. RecF binds preferentially to single-stranded, linear DNA. It also seems to bind ATP. The sequence is that of DNA replication and repair protein RecF from Histophilus somni (strain 2336) (Haemophilus somnus).